The primary structure comprises 500 residues: Neuronal pentraxin receptor (500 aa).

At 1–2 (MK) the chain is on the cytoplasmic side. Residues 3 to 23 (FLAVLLAAGMLAFLGAVICII) traverse the membrane as a helical; Signal-anchor for type II membrane protein segment. At 24–500 (ASVPLAASPA…FDVCKGRAKA (477 aa)) the chain is on the extracellular side. N-linked (GlcNAc...) asparagine glycosylation occurs at Asn-42. Residues 42-63 (NASVASGAAASPGPQRSLSALH) show a composition bias toward low complexity. 2 disordered regions span residues 42-81 (NASVASGAAASPGPQRSLSALHGAGGSAGPPALPGAPAAS) and 162-183 (ESGLPRGLQGAGPRRDTMADGP). The N-linked (GlcNAc...) asparagine glycan is linked to Asn-216. The Pentraxin (PTX) domain maps to 292-494 (DAFKISIPIR…GATKAAFDVC (203 aa)). Cys-322 and Cys-383 form a disulfide bridge. Ca(2+) is bound by residues Asn-347, Glu-425, Gln-426, Asp-427, and Gln-437. N-linked (GlcNAc...) asparagine glycosylation is present at Asn-463.

In terms of assembly, heteropentamer with NPTX1 and/or NPTX2. Also binds taipoxin-associated calcium-binding protein 49 (TCBP49/RCN2). Interacts with KLHL2. Ca(2+) serves as cofactor. In terms of processing, ubiquitinated by a cullin-RING-based BCR (BTB-CUL3-RBX1) E3 ubiquitin-protein ligase complex containing KLHL2.

It is found in the membrane. Its function is as follows. May be involved in mediating uptake of synaptic material during synapse remodeling or in mediating the synaptic clustering of AMPA glutamate receptors at a subset of excitatory synapses. This is Neuronal pentraxin receptor (NPTXR) from Homo sapiens (Human).